A 297-amino-acid chain; its full sequence is UTP--glucose-1-phosphate uridylyltransferase (297 aa).

Belongs to the UDPGP type 2 family.

It carries out the reaction alpha-D-glucose 1-phosphate + UTP + H(+) = UDP-alpha-D-glucose + diphosphate. It participates in carbohydrate metabolism; nucleotide-sugar metabolism. The protein operates within bacterial outer membrane biogenesis; lipopolysaccharide biosynthesis. The polypeptide is UTP--glucose-1-phosphate uridylyltransferase (galF) (Escherichia coli O157:H7).